The chain runs to 657 residues: Acetyl-coenzyme A synthetase (657 aa).

CoA contacts are provided by residues Arg-192 to Lys-195 and Thr-311. Residues Gly-387–Pro-389, Asp-411–Thr-416, Asp-504, Arg-519, and Arg-530 contribute to the ATP site. The Mg(2+) site is built by His-543 and Val-546. Residue Arg-592 participates in CoA binding. Lys-617 carries the post-translational modification N6-acetyllysine.

This sequence belongs to the ATP-dependent AMP-binding enzyme family. Mg(2+) is required as a cofactor. Post-translationally, acetylated. Deacetylation by the SIR2-homolog deacetylase activates the enzyme.

The enzyme catalyses acetate + ATP + CoA = acetyl-CoA + AMP + diphosphate. In terms of biological role, catalyzes the conversion of acetate into acetyl-CoA (AcCoA), an essential intermediate at the junction of anabolic and catabolic pathways. AcsA undergoes a two-step reaction. In the first half reaction, AcsA combines acetate with ATP to form acetyl-adenylate (AcAMP) intermediate. In the second half reaction, it can then transfer the acetyl group from AcAMP to the sulfhydryl group of CoA, forming the product AcCoA. The protein is Acetyl-coenzyme A synthetase of Campylobacter jejuni subsp. jejuni serotype O:2 (strain ATCC 700819 / NCTC 11168).